Reading from the N-terminus, the 60-residue chain is uncharacterized protein (60 aa).

Residues 19 to 39 (LSIMCGCSIYFLLLVFILTFY) traverse the membrane as a helical segment.

Its subcellular location is the membrane. This is an uncharacterized protein from Saccharomyces cerevisiae (strain ATCC 204508 / S288c) (Baker's yeast).